The following is a 210-amino-acid chain: MGLTSWLFGGGKSPQEQLRAHQRSLGRAERELDRERTKLDQRERALIQEIKGSAKAGNTGAARIQARDLMRLRNSRKKMMNAKTQLQAISLRLQTMRTSEQMMQSMRGATRLLTGMNKSMNIPAMARITQQFERENEIMEQRQEMIDENMDDALEEDDEEEADELVNKVLDEIGVDLSQGLPDAATQIGTVPELKTEDNLQARLDELAKR.

Positions 1–38 (MGLTSWLFGGGKSPQEQLRAHQRSLGRAERELDRERTK) are disordered. Positions 15-97 (QEQLRAHQRS…AISLRLQTMR (83 aa)) form a coiled coil. Over residues 26–38 (GRAERELDRERTK) the composition is skewed to basic and acidic residues.

It belongs to the SNF7 family. Core component of the ESCRT-III complex (endosomal sorting required for transport complex III). ESCRT-III appears to be sequentially assembled as a flat lattice on the endosome membrane.

Its subcellular location is the cytoplasm. The protein localises to the endosome membrane. Its function is as follows. Required for the sorting and concentration of proteins resulting in the entry of these proteins into the invaginating vesicles of the multivesicular body (MVB). Acts a component of the ESCRT-III complex, which appears to be critical for late steps in MVB sorting, such as membrane invagination and final cargo sorting and recruitment of late-acting components of the sorting machinery. The MVB pathway requires the sequential function of ESCRT-O, -I,-II and -III complex assemblies. This is ESCRT-III complex subunit did4 (did4) from Schizosaccharomyces pombe (strain 972 / ATCC 24843) (Fission yeast).